Consider the following 115-residue polypeptide: Insulin (115 aa).

The N-terminal stretch at 1–22 (MAALWLQSVSLLVLMLVSWSGS) is a signal peptide. 3 cysteine pairs are disulfide-bonded: cysteine 32/cysteine 101, cysteine 44/cysteine 114, and cysteine 100/cysteine 105. The propeptide at 56–92 (DVDPLLGFLPAKSGGAAAGGENEVAEFAFKDQMEMMV) is c peptide.

Belongs to the insulin family. Heterodimer of a B chain and an A chain linked by two disulfide bonds.

It is found in the secreted. Insulin decreases blood glucose concentration. It increases cell permeability to monosaccharides, amino acids and fatty acids. It accelerates glycolysis, the pentose phosphate cycle, and glycogen synthesis in liver. In Verasper moseri (Barfin flounder), this protein is Insulin (ins).